Reading from the N-terminus, the 313-residue chain is UPF0252 protein AF_0384 (313 aa).

This sequence belongs to the UPF0252 family.

The sequence is that of UPF0252 protein AF_0384 from Archaeoglobus fulgidus (strain ATCC 49558 / DSM 4304 / JCM 9628 / NBRC 100126 / VC-16).